The primary structure comprises 189 residues: Transcription factor FapR (189 aa).

It belongs to the FapR family.

Transcriptional factor involved in regulation of membrane lipid biosynthesis by repressing genes involved in fatty acid and phospholipid metabolism. The sequence is that of Transcription factor FapR from Exiguobacterium sibiricum (strain DSM 17290 / CCUG 55495 / CIP 109462 / JCM 13490 / 255-15).